Here is a 201-residue protein sequence, read N- to C-terminus: Ras-related protein Rab-5A (201 aa).

Residues 16 to 24, 35 to 41, 64 to 68, 122 to 125, and 152 to 154 contribute to the GTP site; these read GEAAVGKSS, LDYQEST, DTAGQ, NKLD, and SAK. An Effector region motif is present at residues 38–46; the sequence is QESTIGAAF. 2 S-geranylgeranyl cysteine lipidation sites follow: Cys-199 and Cys-200.

It belongs to the small GTPase superfamily. Rab family.

It is found in the cell membrane. Its subcellular location is the endosome membrane. Its activity is regulated as follows. Regulated by guanine nucleotide exchange factors (GEFs) which promote the exchange of bound GDP for free GTP. In terms of biological role, required for the fusion of plasma membranes and early endosomes. The polypeptide is Ras-related protein Rab-5A (rab5A) (Dictyostelium discoideum (Social amoeba)).